The following is a 205-amino-acid chain: Protein Rcp (205 aa).

This sequence belongs to the NAD(P)-dependent epimerase/dehydratase family.

This is Protein Rcp (rcp) from Vibrio cholerae serotype O1 (strain ATCC 39315 / El Tor Inaba N16961).